A 132-amino-acid polypeptide reads, in one-letter code: uncharacterized protein (132 aa).

Positions 1–68 (MCSAGELLRG…HTGEPVGDDY (68 aa)) are disordered. A helical transmembrane segment spans residues 100–120 (VIVIFFWVMLWFLGLQALGLV).

Belongs to the FAM241 family.

It is found in the membrane. This is an uncharacterized protein from Homo sapiens (Human).